Consider the following 202-residue polypeptide: Large ribosomal subunit protein bL25 (202 aa).

This sequence belongs to the bacterial ribosomal protein bL25 family. CTC subfamily. As to quaternary structure, part of the 50S ribosomal subunit; part of the 5S rRNA/L5/L18/L25 subcomplex. Contacts the 5S rRNA. Binds to the 5S rRNA independently of L5 and L18.

This is one of the proteins that binds to the 5S RNA in the ribosome where it forms part of the central protuberance. This chain is Large ribosomal subunit protein bL25, found in Clostridium perfringens (strain ATCC 13124 / DSM 756 / JCM 1290 / NCIMB 6125 / NCTC 8237 / Type A).